We begin with the raw amino-acid sequence, 404 residues long: Arginine biosynthesis bifunctional protein ArgJ (404 aa).

Substrate is bound by residues Thr166, Lys189, Thr200, Glu280, Asn399, and Ser404. The active-site Nucleophile is Thr200.

The protein belongs to the ArgJ family. Heterotetramer of two alpha and two beta chains.

It localises to the cytoplasm. It catalyses the reaction N(2)-acetyl-L-ornithine + L-glutamate = N-acetyl-L-glutamate + L-ornithine. The enzyme catalyses L-glutamate + acetyl-CoA = N-acetyl-L-glutamate + CoA + H(+). It functions in the pathway amino-acid biosynthesis; L-arginine biosynthesis; L-ornithine and N-acetyl-L-glutamate from L-glutamate and N(2)-acetyl-L-ornithine (cyclic): step 1/1. It participates in amino-acid biosynthesis; L-arginine biosynthesis; N(2)-acetyl-L-ornithine from L-glutamate: step 1/4. Functionally, catalyzes two activities which are involved in the cyclic version of arginine biosynthesis: the synthesis of N-acetylglutamate from glutamate and acetyl-CoA as the acetyl donor, and of ornithine by transacetylation between N(2)-acetylornithine and glutamate. The sequence is that of Arginine biosynthesis bifunctional protein ArgJ from Mycolicibacterium paratuberculosis (strain ATCC BAA-968 / K-10) (Mycobacterium paratuberculosis).